A 248-amino-acid polypeptide reads, in one-letter code: 5'-nucleotidase SurE (248 aa).

Positions 8, 9, 39, and 91 each coordinate a divalent metal cation.

Belongs to the SurE nucleotidase family. A divalent metal cation is required as a cofactor.

It localises to the cytoplasm. The catalysed reaction is a ribonucleoside 5'-phosphate + H2O = a ribonucleoside + phosphate. In terms of biological role, nucleotidase that shows phosphatase activity on nucleoside 5'-monophosphates. The polypeptide is 5'-nucleotidase SurE (Marinomonas sp. (strain MWYL1)).